The primary structure comprises 103 residues: Large ribosomal subunit protein bL21 (103 aa).

The protein belongs to the bacterial ribosomal protein bL21 family. Part of the 50S ribosomal subunit. Contacts protein L20.

In terms of biological role, this protein binds to 23S rRNA in the presence of protein L20. In Alcanivorax borkumensis (strain ATCC 700651 / DSM 11573 / NCIMB 13689 / SK2), this protein is Large ribosomal subunit protein bL21.